The chain runs to 481 residues: Proline--tRNA ligase (481 aa).

It belongs to the class-II aminoacyl-tRNA synthetase family. ProS type 3 subfamily. Homodimer.

The protein localises to the cytoplasm. It catalyses the reaction tRNA(Pro) + L-proline + ATP = L-prolyl-tRNA(Pro) + AMP + diphosphate. Its function is as follows. Catalyzes the attachment of proline to tRNA(Pro) in a two-step reaction: proline is first activated by ATP to form Pro-AMP and then transferred to the acceptor end of tRNA(Pro). The chain is Proline--tRNA ligase from Saccharolobus islandicus (strain Y.N.15.51 / Yellowstone #2) (Sulfolobus islandicus).